A 911-amino-acid chain; its full sequence is Inter-alpha-trypsin inhibitor heavy chain H1 (911 aa).

The signal sequence occupies residues 1–27 (MDGAMGPRGLLLCMYLVSLLILQAMPA). Residues 28 to 34 (LGSATGR) constitute a propeptide that is removed on maturation. Residues 37–166 (SSEKRQAVDT…KVTFQLTYEE (130 aa)) form the VIT domain. S-linked (Hex...) cysteine glycosylation is present at cysteine 60. A Phosphoserine modification is found at serine 129. The short motif at 181–184 (VKPK) is the Phagocytosis uptake signal element. Cystine bridges form between cysteine 244/cysteine 247 and cysteine 268/cysteine 540. A glycan (N-linked (GlcNAc...) (complex) asparagine) is linked at asparagine 285. The VWFA domain occupies 290 to 450 (NKNVVFVIDI…FNFLEVMSME (161 aa)). Residues 387-911 (SLPELSNHAS…YTDYIVPDIF (525 aa)) form a hyaluronan-binding region. Phosphothreonine is present on residues threonine 402 and threonine 407. N-linked (GlcNAc...) (complex) asparagine glycosylation is present at asparagine 588. A glycan (O-linked (GalNAc...) threonine) is linked at threonine 653. An Aspartate 1-(chondroitin 4-sulfate)-ester modification is found at aspartate 672. A propeptide spanning residues 673-911 (PHFIIHVPQK…YTDYIVPDIF (239 aa)) is cleaved from the precursor. Residue asparagine 750 is glycosylated (N-linked (GlcNAc...) asparagine).

Belongs to the ITIH family. As to quaternary structure, I-alpha-I plasma protease inhibitors are assembled from one or two heavy chains (HC) and one light chain, bikunin. Inter-alpha-inhibitor (I-alpha-I) is composed of ITIH1/HC1, ITIH2/HC2 and bikunin. Interacts with TNFAIP6 (via Link and CUB domains). In terms of processing, heavy chains are linked to bikunin via chondroitin 4-sulfate esterified to the alpha-carboxyl of the C-terminal aspartate after propeptide cleavage. Post-translationally, the S-linked glycan is composed of two 6-carbon sugars, possibly Glc or Gal.

The protein localises to the secreted. May act as a carrier of hyaluronan in serum or as a binding protein between hyaluronan and other matrix protein, including those on cell surfaces in tissues to regulate the localization, synthesis and degradation of hyaluronan which are essential to cells undergoing biological processes. Functionally, contains a potential peptide which could stimulate a broad spectrum of phagocytotic cells. This chain is Inter-alpha-trypsin inhibitor heavy chain H1 (ITIH1), found in Homo sapiens (Human).